A 283-amino-acid chain; its full sequence is Diaminopimelate epimerase (283 aa).

Positions 14, 47, and 67 each coordinate substrate. The active-site Proton donor is the cysteine 76. Residues 77-78, asparagine 164, asparagine 197, and 215-216 contribute to the substrate site; these read GN and ER. Cysteine 224 functions as the Proton acceptor in the catalytic mechanism. Substrate is bound at residue 225–226; sequence GT.

This sequence belongs to the diaminopimelate epimerase family. As to quaternary structure, homodimer.

The protein localises to the cytoplasm. It carries out the reaction (2S,6S)-2,6-diaminopimelate = meso-2,6-diaminopimelate. It functions in the pathway amino-acid biosynthesis; L-lysine biosynthesis via DAP pathway; DL-2,6-diaminopimelate from LL-2,6-diaminopimelate: step 1/1. Its function is as follows. Catalyzes the stereoinversion of LL-2,6-diaminopimelate (L,L-DAP) to meso-diaminopimelate (meso-DAP), a precursor of L-lysine and an essential component of the bacterial peptidoglycan. This chain is Diaminopimelate epimerase, found in Neisseria meningitidis serogroup A / serotype 4A (strain DSM 15465 / Z2491).